A 258-amino-acid polypeptide reads, in one-letter code: Aspartate/glutamate leucyltransferase (258 aa).

It belongs to the R-transferase family. Bpt subfamily.

It localises to the cytoplasm. The enzyme catalyses N-terminal L-glutamyl-[protein] + L-leucyl-tRNA(Leu) = N-terminal L-leucyl-L-glutamyl-[protein] + tRNA(Leu) + H(+). It carries out the reaction N-terminal L-aspartyl-[protein] + L-leucyl-tRNA(Leu) = N-terminal L-leucyl-L-aspartyl-[protein] + tRNA(Leu) + H(+). Its function is as follows. Functions in the N-end rule pathway of protein degradation where it conjugates Leu from its aminoacyl-tRNA to the N-termini of proteins containing an N-terminal aspartate or glutamate. The protein is Aspartate/glutamate leucyltransferase of Rhizobium etli (strain ATCC 51251 / DSM 11541 / JCM 21823 / NBRC 15573 / CFN 42).